The sequence spans 633 residues: tRNA uridine 5-carboxymethylaminomethyl modification enzyme MnmG (633 aa).

Position 18-23 (18-23 (GAGHAG)) interacts with FAD. Residues 208 to 232 (PRVNGNTIDFDKTEEQPGDKTPNHF) form a disordered region. A compositionally biased stretch (basic and acidic residues) spans 216–229 (DFDKTEEQPGDKTP). 279–293 (GPRYCPSIEDKIVRF) lines the NAD(+) pocket.

The protein belongs to the MnmG family. Homodimer. Heterotetramer of two MnmE and two MnmG subunits. It depends on FAD as a cofactor.

Its subcellular location is the cytoplasm. In terms of biological role, NAD-binding protein involved in the addition of a carboxymethylaminomethyl (cmnm) group at the wobble position (U34) of certain tRNAs, forming tRNA-cmnm(5)s(2)U34. In Lacticaseibacillus paracasei (strain ATCC 334 / BCRC 17002 / CCUG 31169 / CIP 107868 / KCTC 3260 / NRRL B-441) (Lactobacillus paracasei), this protein is tRNA uridine 5-carboxymethylaminomethyl modification enzyme MnmG.